The sequence spans 424 residues: Histidine--tRNA ligase (424 aa).

The protein belongs to the class-II aminoacyl-tRNA synthetase family. Homodimer.

The protein resides in the cytoplasm. The catalysed reaction is tRNA(His) + L-histidine + ATP = L-histidyl-tRNA(His) + AMP + diphosphate + H(+). The sequence is that of Histidine--tRNA ligase from Escherichia coli O139:H28 (strain E24377A / ETEC).